A 123-amino-acid chain; its full sequence is UPF0102 protein APJL_1381 (123 aa).

The protein belongs to the UPF0102 family.

This Actinobacillus pleuropneumoniae serotype 3 (strain JL03) protein is UPF0102 protein APJL_1381.